Here is a 551-residue protein sequence, read N- to C-terminus: Glucans biosynthesis protein D (551 aa).

The tat-type signal signal peptide spans 1–32 (MNRRRFLQGSLAMAALSGTTGLSTLFSRAAFA).

It belongs to the OpgD/OpgG family. In terms of processing, predicted to be exported by the Tat system. The position of the signal peptide cleavage has not been experimentally proven.

The protein localises to the periplasm. It functions in the pathway glycan metabolism; osmoregulated periplasmic glucan (OPG) biosynthesis. Its function is as follows. Probably involved in the control of the structural glucose backbone of osmoregulated periplasmic glucans (OPGs). This is Glucans biosynthesis protein D from Enterobacter sp. (strain 638).